We begin with the raw amino-acid sequence, 242 residues long: 3-dehydroquinate dehydratase (242 aa).

3-dehydroquinate-binding positions include E39–R41 and R73. Residue H135 is the Proton donor/acceptor of the active site. The active-site Schiff-base intermediate with substrate is K162. 2 residues coordinate 3-dehydroquinate: R203 and Q228.

This sequence belongs to the type-I 3-dehydroquinase family. In terms of assembly, homodimer.

It carries out the reaction 3-dehydroquinate = 3-dehydroshikimate + H2O. Its pathway is metabolic intermediate biosynthesis; chorismate biosynthesis; chorismate from D-erythrose 4-phosphate and phosphoenolpyruvate: step 3/7. In terms of biological role, involved in the third step of the chorismate pathway, which leads to the biosynthesis of aromatic amino acids. Catalyzes the cis-dehydration of 3-dehydroquinate (DHQ) and introduces the first double bond of the aromatic ring to yield 3-dehydroshikimate. This Methanosarcina acetivorans (strain ATCC 35395 / DSM 2834 / JCM 12185 / C2A) protein is 3-dehydroquinate dehydratase.